We begin with the raw amino-acid sequence, 201 residues long: 3-isopropylmalate dehydratase small subunit (201 aa).

Belongs to the LeuD family. LeuD type 1 subfamily. Heterodimer of LeuC and LeuD.

The enzyme catalyses (2R,3S)-3-isopropylmalate = (2S)-2-isopropylmalate. The protein operates within amino-acid biosynthesis; L-leucine biosynthesis; L-leucine from 3-methyl-2-oxobutanoate: step 2/4. Its function is as follows. Catalyzes the isomerization between 2-isopropylmalate and 3-isopropylmalate, via the formation of 2-isopropylmaleate. The polypeptide is 3-isopropylmalate dehydratase small subunit (Cytophaga hutchinsonii (strain ATCC 33406 / DSM 1761 / CIP 103989 / NBRC 15051 / NCIMB 9469 / D465)).